Consider the following 680-residue polypeptide: Oligopeptidase A (680 aa).

Residue His-469 coordinates Zn(2+). Glu-470 is a catalytic residue. Zn(2+) is bound by residues His-473 and His-476.

This sequence belongs to the peptidase M3 family. Zn(2+) serves as cofactor.

It carries out the reaction Hydrolysis of oligopeptides, with broad specificity. Gly or Ala commonly occur as P1 or P1' residues, but more distant residues are also important, as is shown by the fact that Z-Gly-Pro-Gly-|-Gly-Pro-Ala is cleaved, but not Z-(Gly)(5).. In terms of biological role, may play a specific role in the degradation of signal peptides after they are released from precursor forms of secreted proteins. Can cleave N-acetyl-L-Ala(4). The polypeptide is Oligopeptidase A (prlC) (Salmonella typhimurium (strain LT2 / SGSC1412 / ATCC 700720)).